A 283-amino-acid polypeptide reads, in one-letter code: tRNA-cytidine(32) 2-sulfurtransferase (283 aa).

The PP-loop motif signature appears at 32–37; it reads SGGKDS. Positions 107, 110, and 198 each coordinate [4Fe-4S] cluster.

Belongs to the TtcA family. As to quaternary structure, homodimer. Requires Mg(2+) as cofactor. It depends on [4Fe-4S] cluster as a cofactor.

The protein localises to the cytoplasm. The enzyme catalyses cytidine(32) in tRNA + S-sulfanyl-L-cysteinyl-[cysteine desulfurase] + AH2 + ATP = 2-thiocytidine(32) in tRNA + L-cysteinyl-[cysteine desulfurase] + A + AMP + diphosphate + H(+). Its pathway is tRNA modification. Catalyzes the ATP-dependent 2-thiolation of cytidine in position 32 of tRNA, to form 2-thiocytidine (s(2)C32). The sulfur atoms are provided by the cysteine/cysteine desulfurase (IscS) system. This is tRNA-cytidine(32) 2-sulfurtransferase from Sorangium cellulosum (strain So ce56) (Polyangium cellulosum (strain So ce56)).